A 290-amino-acid chain; its full sequence is Ig delta chain C region membrane-bound form (290 aa).

The region spanning Pro-5 to Thr-105 is the Ig-like 1 domain. Residues Cys-26 and Cys-78 are joined by a disulfide bond. N-linked (GlcNAc...) asparagine glycosylation is found at Asn-58 and Asn-75. The disordered stretch occupies residues Pro-89 to Lys-111. Polar residues predominate over residues Trp-96 to Lys-111. 3 N-linked (GlcNAc...) asparagine glycosylation sites follow: Asn-112, Asn-135, and Asn-227. The 101-residue stretch at Pro-133–Ala-233 folds into the Ig-like 2 domain. Residues Gly-262–Leu-279 form a helical membrane-spanning segment. Topologically, residues Tyr-280 to Lys-290 are cytoplasmic.

Cell lines producing IgD contain several mRNA species for Ig delta chains. In plasmacytomas, the secreted form is the major component, and the membrane-bound form is a minor component. In spleen, however, the membrane-bound form is the major component. These two forms differ in their C-terminal segments.

The protein resides in the cell membrane. The polypeptide is Ig delta chain C region membrane-bound form (Mus musculus (Mouse)).